The primary structure comprises 337 residues: Nodulation protein D 2 (337 aa).

One can recognise an HTH lysR-type domain in the interval 6-63 (LDLNLLVVLDSLMTARNLTAAARSINLSQPAMSAAVARLRAYFGDELFTMRGRTLVPT). A DNA-binding region (H-T-H motif) is located at residues 23 to 42 (LTAAARSINLSQPAMSAAVA).

It belongs to the LysR transcriptional regulatory family.

In terms of biological role, nodD regulates the expression of the nodABCFE genes which encode other nodulation proteins. NodD is also a negative regulator of its own expression. Binds flavonoids as inducers. The polypeptide is Nodulation protein D 2 (nodD2) (Bradyrhizobium sp. (strain NC92)).